Consider the following 171-residue polypeptide: Cyclin-dependent kinase inhibitor 2A (171 aa).

A compositionally biased stretch (basic and acidic residues) spans 33–42 (ASMHTKHESE). Residues 33-52 (ASMHTKHESEESFSGEKLTE) form a disordered region. ANK repeat units follow at residues 45–74 (FSGE…NPNA), 78–106 (FGRS…EPNT), and 111–140 (TLTL…RLDV).

The protein belongs to the CDKN2 cyclin-dependent kinase inhibitor family. Heterodimer with CDK4 or CDK6. Predominamt P16 complexes contained CDK6. Interacts with CDK4 (both 'T-172'-phosphorylated and non-phosphorylated forms); the interaction inhibits cyclin D-CDK4 kinase activity. Interacts with ISCO2. Expressed predominantly in lung and testis. In the testis, restricted to germ cells in the seminiferous epithelium. Not detected in premeiotic spermatogonia but high levels found in postmeiotic spermatids. In primary tumors, low levels detected in melanocytic hyperplasias. Higher levels found in non-metastatic and metastatic melanomas.

It is found in the cytoplasm. It localises to the nucleus. In terms of biological role, acts as a negative regulator of the proliferation of normal cells by interacting strongly with CDK4 and CDK6. This inhibits their ability to interact with cyclins D and to phosphorylate the retinoblastoma protein. This Monodelphis domestica (Gray short-tailed opossum) protein is Cyclin-dependent kinase inhibitor 2A.